The primary structure comprises 353 residues: Probable tRNA pseudouridine synthase B (353 aa).

Catalysis depends on D45, which acts as the Nucleophile. The region spanning 211-287 (YPKIVAKKSA…DHIFVEAKHG (77 aa)) is the PUA domain. The segment at 292-353 (VRDREKDVQR…TGVHRRPGSH (62 aa)) is disordered. Basic and acidic residues predominate over residues 309-328 (NIRDAAHGPDSRTGRGRKET). A compositionally biased stretch (basic residues) spans 336–353 (RVRKLQNKTGVHRRPGSH).

Belongs to the pseudouridine synthase TruB family. Type 2 subfamily.

It catalyses the reaction uridine(55) in tRNA = pseudouridine(55) in tRNA. Could be responsible for synthesis of pseudouridine from uracil-55 in the psi GC loop of transfer RNAs. The polypeptide is Probable tRNA pseudouridine synthase B (Thermoplasma volcanium (strain ATCC 51530 / DSM 4299 / JCM 9571 / NBRC 15438 / GSS1)).